The chain runs to 201 residues: UPF0323 lipoprotein Cj0371 (201 aa).

A signal peptide spans 1 to 26 (MKKIKKIIQIGMIGGLAAVAGGALAG). Residue cysteine 27 is the site of N-palmitoyl cysteine attachment. A lipid anchor (S-diacylglycerol cysteine) is attached at cysteine 27. The segment at 169–201 (NKAGTTSSASSAKKSGFFGGGSKATSSSSSFGS) is disordered. Low complexity-rich tracts occupy residues 170-184 (KAGT…KKSG) and 191-201 (KATSSSSSFGS).

It belongs to the UPF0323 family.

The protein resides in the cell membrane. This chain is UPF0323 lipoprotein Cj0371, found in Campylobacter jejuni subsp. jejuni serotype O:2 (strain ATCC 700819 / NCTC 11168).